Here is a 522-residue protein sequence, read N- to C-terminus: DEP domain-containing protein 7 (522 aa).

In terms of domain architecture, DEP spans Leu46–Asn138.

Belongs to the DEPDC7 family.

This Xenopus laevis (African clawed frog) protein is DEP domain-containing protein 7 (depdc7).